The following is a 600-amino-acid chain: Proline--tRNA ligase (600 aa).

It belongs to the class-II aminoacyl-tRNA synthetase family. ProS type 1 subfamily. In terms of assembly, homodimer.

It is found in the cytoplasm. The enzyme catalyses tRNA(Pro) + L-proline + ATP = L-prolyl-tRNA(Pro) + AMP + diphosphate. Catalyzes the attachment of proline to tRNA(Pro) in a two-step reaction: proline is first activated by ATP to form Pro-AMP and then transferred to the acceptor end of tRNA(Pro). As ProRS can inadvertently accommodate and process non-cognate amino acids such as alanine and cysteine, to avoid such errors it has two additional distinct editing activities against alanine. One activity is designated as 'pretransfer' editing and involves the tRNA(Pro)-independent hydrolysis of activated Ala-AMP. The other activity is designated 'posttransfer' editing and involves deacylation of mischarged Ala-tRNA(Pro). The misacylated Cys-tRNA(Pro) is not edited by ProRS. The polypeptide is Proline--tRNA ligase (Prochlorococcus marinus (strain MIT 9515)).